Consider the following 251-residue polypeptide: Bidirectional sugar transporter SWEET4 (251 aa).

Residues 1-12 (MVNATVARNIAG) lie on the Extracellular side of the membrane. An N-linked (GlcNAc...) asparagine glycan is attached at Asn-3. The MtN3/slv 1 domain occupies 12-96 (GICGNVISLF…LAIFFFFSPT (85 aa)). A helical transmembrane segment spans residues 13 to 33 (ICGNVISLFLFLSPIPTFITI). Topologically, residues 34–45 (YKKKKVEEYKAD) are cytoplasmic. The chain crosses the membrane as a helical span at residues 46-66 (PYLATVLNCALWVFYGLPMVQ). Residues 67–72 (PDSLLV) are Extracellular-facing. Residues 73 to 93 (ITINGTGLAIELVYLAIFFFF) form a helical membrane-spanning segment. Topologically, residues 94-103 (SPTSRKVKVG) are cytoplasmic. The chain crosses the membrane as a helical span at residues 104–124 (LWLIGEMVFVGIVATCTLLLF). Residues 125-132 (HTHNQRSS) are Extracellular-facing. The chain crosses the membrane as a helical span at residues 133–153 (FVGIFCVIFVSLMYIAPLTIM). A MtN3/slv 2 domain is found at 133–216 (FVGIFCVIFV…LILYACYYKT (84 aa)). The Cytoplasmic portion of the chain corresponds to 154-163 (SKVIKTKSVK). A helical membrane pass occupies residues 164–186 (YMPFSLSLANFLNGVVWVIYALI). Residues 187 to 190 (KFDL) are Extracellular-facing. Residues 191-213 (FILIGNGLGTVSGAVQLILYACY) traverse the membrane as a helical segment. The Cytoplasmic segment spans residues 214–251 (YKTTPKDDEDEEDEENLSKVNSQLQLSGNSGQAKRVSA). Residues 220 to 251 (DDEDEEDEENLSKVNSQLQLSGNSGQAKRVSA) are disordered. Residues 231 to 245 (SKVNSQLQLSGNSGQ) show a composition bias toward polar residues.

It belongs to the SWEET sugar transporter family. As to quaternary structure, forms homooligomers and heterooligomers with SWEET8 and SWEET17.

It localises to the cell membrane. Mediates both low-affinity uptake and efflux of sugar across the plasma membrane. This Arabidopsis thaliana (Mouse-ear cress) protein is Bidirectional sugar transporter SWEET4.